A 325-amino-acid polypeptide reads, in one-letter code: D-alanine--D-alanine ligase (325 aa).

The ATP-grasp domain occupies 121-316 (KYVFEGCGLP…FEELVVRILR (196 aa)). 147–202 (VAALGTPLSVKPAHEGSSIGIRKVNSAAELAEAYEAAARLDDLVLVEQWIEGPEFT) provides a ligand contact to ATP. D270, E283, and N285 together coordinate Mg(2+).

The protein belongs to the D-alanine--D-alanine ligase family. Mg(2+) is required as a cofactor. The cofactor is Mn(2+).

The protein localises to the cytoplasm. The catalysed reaction is 2 D-alanine + ATP = D-alanyl-D-alanine + ADP + phosphate + H(+). It functions in the pathway cell wall biogenesis; peptidoglycan biosynthesis. Cell wall formation. The protein is D-alanine--D-alanine ligase of Marinobacter nauticus (strain ATCC 700491 / DSM 11845 / VT8) (Marinobacter aquaeolei).